The chain runs to 366 residues: 5-formaminoimidazole-4-carboxamide-1-(beta)-D-ribofuranosyl 5'-monophosphate synthetase (366 aa).

5-amino-1-(5-phospho-beta-D-ribosyl)imidazole-4-carboxamide is bound by residues histidine 27 and serine 96. The 227-residue stretch at 131 to 357 folds into the ATP-grasp domain; the sequence is RKWLEDAGVP…IAREIKEAVK (227 aa). Residues 154–208 and glutamate 239 each bind ATP; that span reads PVIV…VRFY. Asparagine 263 is a binding site for 5-amino-1-(5-phospho-beta-D-ribosyl)imidazole-4-carboxamide. Mg(2+) contacts are provided by glutamate 302 and glutamate 315.

The protein belongs to the phosphohexose mutase family. Mg(2+) is required as a cofactor. The cofactor is Mn(2+).

It carries out the reaction 5-amino-1-(5-phospho-beta-D-ribosyl)imidazole-4-carboxamide + formate + ATP = 5-formamido-1-(5-phospho-D-ribosyl)imidazole-4-carboxamide + ADP + phosphate. It functions in the pathway purine metabolism; IMP biosynthesis via de novo pathway; 5-formamido-1-(5-phospho-D-ribosyl)imidazole-4-carboxamide from 5-amino-1-(5-phospho-D-ribosyl)imidazole-4-carboxamide (formate route): step 1/1. In terms of biological role, catalyzes the ATP- and formate-dependent formylation of 5-aminoimidazole-4-carboxamide-1-beta-d-ribofuranosyl 5'-monophosphate (AICAR) to 5-formaminoimidazole-4-carboxamide-1-beta-d-ribofuranosyl 5'-monophosphate (FAICAR) in the absence of folates. The sequence is that of 5-formaminoimidazole-4-carboxamide-1-(beta)-D-ribofuranosyl 5'-monophosphate synthetase from Korarchaeum cryptofilum (strain OPF8).